Consider the following 207-residue polypeptide: Large ribosomal subunit protein bL25 (207 aa).

This sequence belongs to the bacterial ribosomal protein bL25 family. CTC subfamily. As to quaternary structure, part of the 50S ribosomal subunit; part of the 5S rRNA/L5/L18/L25 subcomplex. Contacts the 5S rRNA. Binds to the 5S rRNA independently of L5 and L18.

Functionally, this is one of the proteins that binds to the 5S RNA in the ribosome where it forms part of the central protuberance. In Rhizorhabdus wittichii (strain DSM 6014 / CCUG 31198 / JCM 15750 / NBRC 105917 / EY 4224 / RW1) (Sphingomonas wittichii), this protein is Large ribosomal subunit protein bL25.